The chain runs to 551 residues: MGKPGRSSIPSVGVHHQGPMSFPDFSASDAQIQWQRFCDLLWYHEDLGIWLDISRMHVNPSHLEQLQPGFDKAFAAMAELEAGAIANPDEQRQVGHYWLRTPQLAPNEAVRDQIATEIDQIDQFGRDVISGVIKAPGGQPFTDVLWIGIGGSGLGPLLMIRALQGHGSGLPFHFFDNVDPNGMSAVLAELDDRLATTLVVTVSKSGGTPEPHLGMEQARHRVESRGGRWADQAVAITMVDSKLDREAQQDGWLKSFSMFDWVGGRTSITSAVGLLPGALIGADIRDFLAGAAQMDDATRLADLRRNPAALMAASWFVAGDGKGRRDMVVLPYRDRLEVFSRYLQQLVMESLGKRLDRDGNEVNQGIAVYGNKGSTDQHAYVQQLRDGVDNFFATFIEVLEDVSDIPVIKDECPGDFLDGFLQGTRSALTEGGRQSLSISMRRFDARRLGALIALFERAVGFYGDLVNINAYHQPGVEAGKKAAAAILDLQSRVEAVLKDGAPRTVSEIRQAVGDGSDEAIFWIMRHLAGNDRGYRAEGDWANPASIRFSCS.

The active-site Proton donor is the E349. Residues H378 and K480 contribute to the active site.

The protein belongs to the GPI family.

The protein localises to the cytoplasm. The enzyme catalyses alpha-D-glucose 6-phosphate = beta-D-fructose 6-phosphate. It functions in the pathway carbohydrate biosynthesis; gluconeogenesis. Its pathway is carbohydrate degradation; glycolysis; D-glyceraldehyde 3-phosphate and glycerone phosphate from D-glucose: step 2/4. Catalyzes the reversible isomerization of glucose-6-phosphate to fructose-6-phosphate. In Parasynechococcus marenigrum (strain WH8102), this protein is Glucose-6-phosphate isomerase.